The chain runs to 290 residues: Ribosomal RNA small subunit methyltransferase A (290 aa).

Positions 37, 39, 64, 85, 115, and 132 each coordinate S-adenosyl-L-methionine.

It belongs to the class I-like SAM-binding methyltransferase superfamily. rRNA adenine N(6)-methyltransferase family. RsmA subfamily.

The protein localises to the cytoplasm. It carries out the reaction adenosine(1518)/adenosine(1519) in 16S rRNA + 4 S-adenosyl-L-methionine = N(6)-dimethyladenosine(1518)/N(6)-dimethyladenosine(1519) in 16S rRNA + 4 S-adenosyl-L-homocysteine + 4 H(+). Specifically dimethylates two adjacent adenosines (A1518 and A1519) in the loop of a conserved hairpin near the 3'-end of 16S rRNA in the 30S particle. May play a critical role in biogenesis of 30S subunits. This Acidothermus cellulolyticus (strain ATCC 43068 / DSM 8971 / 11B) protein is Ribosomal RNA small subunit methyltransferase A.